The sequence spans 601 residues: UvrABC system protein C (601 aa).

The GIY-YIG domain occupies 17 to 95 (TLPGVYRMLD…IKALAPRYNI (79 aa)). The UVR domain maps to 204-239 (SELINELTRRMTAAAEAMAFEQAAELRDQIQALARV).

It belongs to the UvrC family. Interacts with UvrB in an incision complex.

The protein resides in the cytoplasm. The UvrABC repair system catalyzes the recognition and processing of DNA lesions. UvrC both incises the 5' and 3' sides of the lesion. The N-terminal half is responsible for the 3' incision and the C-terminal half is responsible for the 5' incision. This chain is UvrABC system protein C, found in Chromobacterium violaceum (strain ATCC 12472 / DSM 30191 / JCM 1249 / CCUG 213 / NBRC 12614 / NCIMB 9131 / NCTC 9757 / MK).